A 263-amino-acid chain; its full sequence is Eukaryotic translation initiation factor 3 subunit J-B (263 aa).

Over residues 1-13 (MAAAAAAAAAAAA) the composition is skewed to low complexity. The disordered stretch occupies residues 1 to 115 (MAAAAAAAAA…EPEESKVLTP (115 aa)). N-acetylalanine is present on Ala-2. Positions 6–74 (AAAAAAAAGD…KEEAEVKPEV (69 aa)) are sufficient for interaction with EIF3B. 3 positions are modified to phosphoserine: Ser-16, Ser-18, and Ser-25. Acidic residues predominate over residues 45-66 (EGEDEDEDVKDNWDDDDDENKE). A compositionally biased stretch (basic and acidic residues) spans 67 to 111 (EAEVKPEVKISEKKKIAEKIKEKERQQKKRQEEIKKRLEEPEESK). Residues 75–140 (KISEKKKIAE…ESDLELAKET (66 aa)) adopt a coiled-coil conformation. Lys-111 participates in a covalent cross-link: Glycyl lysine isopeptide (Lys-Gly) (interchain with G-Cter in SUMO2). Residue Thr-114 is modified to Phosphothreonine. Residue Ser-132 is modified to Phosphoserine. Residues 248 to 263 (YGGYEGGYVQDYEDFM) are promotes stable association with the 40S ribosome. Tyr-259 is modified (phosphotyrosine).

It belongs to the eIF-3 subunit J family. As to quaternary structure, component of the eukaryotic translation initiation factor 3 (eIF-3) complex, which is composed of 13 subunits: EIF3A, EIF3B, EIF3C, EIF3D, EIF3E, EIF3F, EIF3G, EIF3H, EIF3I, EIF3J, EIF3K, EIF3L and EIF3M. The eIF-3 complex appears to include 3 stable modules: module A is composed of EIF3A, EIF3B, EIF3G and EIF3I; module B is composed of EIF3F, EIF3H, and EIF3M; and module C is composed of EIF3C, EIF3D, EIF3E, EIF3K and EIF3L. EIF3C of module C binds EIF3B of module A and EIF3H of module B, thereby linking the three modules. EIF3J is a labile subunit that binds to the eIF-3 complex via EIF3B. The eIF-3 complex interacts with RPS6KB1 under conditions of nutrient depletion. Mitogenic stimulation leads to binding and activation of a complex composed of MTOR and RPTOR, leading to phosphorylation and release of RPS6KB1 and binding of EIF4B to eIF-3. In terms of processing, phosphorylated. Phosphorylation is enhanced upon serum stimulation.

The protein resides in the cytoplasm. Its function is as follows. Component of the eukaryotic translation initiation factor 3 (eIF-3) complex, which is required for several steps in the initiation of protein synthesis. The eIF-3 complex associates with the 40S ribosome and facilitates the recruitment of eIF-1, eIF-1A, eIF-2:GTP:methionyl-tRNAi and eIF-5 to form the 43S pre-initiation complex (43S PIC). The eIF-3 complex stimulates mRNA recruitment to the 43S PIC and scanning of the mRNA for AUG recognition. The eIF-3 complex is also required for disassembly and recycling of post-termination ribosomal complexes and subsequently prevents premature joining of the 40S and 60S ribosomal subunits prior to initiation. The eIF-3 complex specifically targets and initiates translation of a subset of mRNAs involved in cell proliferation, including cell cycling, differentiation and apoptosis, and uses different modes of RNA stem-loop binding to exert either translational activation or repression. This subunit binds directly within the mRNA entry channel of the 40S ribosome to the aminoacyl (A) site. It may regulate the interaction between the 43S PIC and mRNA. This chain is Eukaryotic translation initiation factor 3 subunit J-B (Eif3j2), found in Mus musculus (Mouse).